Here is a 248-residue protein sequence, read N- to C-terminus: Thioesterase FSL2 (248 aa).

Residues S125, D195, and H223 each act as charge relay system in the active site.

The protein belongs to the LovG family.

Its pathway is secondary metabolite biosynthesis. Functionally, thioesterase; part of the gene cluster that mediates the biosynthesis of fusarielins F, G and H, decaketide compounds with 5 methylations and a decaline core that act as mycoestrogens as they stimulate growth of MCF-7 breast cancer cells. The initial compound in the pathway is produced by the reducing polyketide synthase FSL1. FSL1 lacks an active enoyl reductase (ER) domain and biosynthesis of fusarielins relies on the trans-acting enoyl reductase FSL5, before it is released through hydrolysis catalyzed by the thioesterase FSL2. Fusarielins F, G, and H have a C11=C12 cis double bond and is fully reduced between C10 and C11 and between C12 and C13. FSL3 can be involved in the formation of the C11=C12 cis double bond by moving a hypothetical C10=C11 or C12=C13 trans double bond to form prefusarielin. Prefusarielin is oxygenated at C15 and C16 by the cytochrome P450 monooxygenase FSL4, resulting in fusarielin F, which subsequently is epoxidized into fusarielin G by the same enzyme. The final step in the pathway is a reduction of the carboxylic acid moiety to yield fusarielin H via a still undetermined mechanism. This is Thioesterase FSL2 from Gibberella zeae (strain ATCC MYA-4620 / CBS 123657 / FGSC 9075 / NRRL 31084 / PH-1) (Wheat head blight fungus).